Consider the following 514-residue polypeptide: 2,3-bisphosphoglycerate-independent phosphoglycerate mutase (514 aa).

Mn(2+)-binding residues include Asp12 and Ser62. The active-site Phosphoserine intermediate is the Ser62. Substrate-binding positions include His123, 153–154 (RD), Arg185, Arg191, 260–263 (RPDR), and Lys335. The Mn(2+) site is built by Asp402, His406, Asp443, His444, and His462.

Belongs to the BPG-independent phosphoglycerate mutase family. Monomer. Requires Mn(2+) as cofactor.

It catalyses the reaction (2R)-2-phosphoglycerate = (2R)-3-phosphoglycerate. It participates in carbohydrate degradation; glycolysis; pyruvate from D-glyceraldehyde 3-phosphate: step 3/5. Functionally, catalyzes the interconversion of 2-phosphoglycerate and 3-phosphoglycerate. The sequence is that of 2,3-bisphosphoglycerate-independent phosphoglycerate mutase from Lachnoclostridium phytofermentans (strain ATCC 700394 / DSM 18823 / ISDg) (Clostridium phytofermentans).